Here is a 649-residue protein sequence, read N- to C-terminus: Nitrosuccinic acid synthase npaA (649 aa).

It belongs to the nitrosuccinic acid synthase family. The cofactor is FAD.

It catalyses the reaction L-aspartate + 3 NADPH + 3 O2 + 2 H(+) = 2-nitrobutanedioate + 3 NADP(+) + 4 H2O. Its pathway is mycotoxin biosynthesis. Nitrosuccinic acid synthase; part of the gene cluster that mediates the biosynthesis of the deadly neurotoxic nitroalkane 3-nitropropanoic acid (3-NPA) that acts as an antimetabolite of succinate and irreversibly inhibits succinate dehydrogenase and disrupts mitochondrial oxidative phosphorylation. NpaA catalyzes the iterative oxidation of L-aspartic acid to nitrosuccinic acid (2-nitrobutanedioate). Alternative amino acid substrates such as L-glutamate and D-aspartate are not accepted by npaA as a substrate, showing the strict substrate specificity toward L-aspartate. The nitrosuccinic acid decarboxylase npaB then facilitates decarboxylation of Nitrosuccinic acid to produce 3-NPA. The polypeptide is Nitrosuccinic acid synthase npaA (Aspergillus oryzae (strain ATCC 42149 / RIB 40) (Yellow koji mold)).